Here is a 257-residue protein sequence, read N- to C-terminus: Thiazole synthase (257 aa).

Lys-96 acts as the Schiff-base intermediate with DXP in catalysis. 1-deoxy-D-xylulose 5-phosphate is bound by residues Gly-157, 184-185, and 206-207; these read AG and NT.

It belongs to the ThiG family. Homotetramer. Forms heterodimers with either ThiH or ThiS.

The protein resides in the cytoplasm. It catalyses the reaction [ThiS sulfur-carrier protein]-C-terminal-Gly-aminoethanethioate + 2-iminoacetate + 1-deoxy-D-xylulose 5-phosphate = [ThiS sulfur-carrier protein]-C-terminal Gly-Gly + 2-[(2R,5Z)-2-carboxy-4-methylthiazol-5(2H)-ylidene]ethyl phosphate + 2 H2O + H(+). It participates in cofactor biosynthesis; thiamine diphosphate biosynthesis. Catalyzes the rearrangement of 1-deoxy-D-xylulose 5-phosphate (DXP) to produce the thiazole phosphate moiety of thiamine. Sulfur is provided by the thiocarboxylate moiety of the carrier protein ThiS. In vitro, sulfur can be provided by H(2)S. The protein is Thiazole synthase of Rhizobium etli (strain ATCC 51251 / DSM 11541 / JCM 21823 / NBRC 15573 / CFN 42).